We begin with the raw amino-acid sequence, 525 residues long: Polyamine aminopropyltransferase 1 (525 aa).

The next 6 membrane-spanning stretches (helical) occupy residues 21–41, 53–73, 89–109, 117–137, 155–175, and 180–200; these read ALLVLAVFVVASCGLAYELIA, ILQFSSIIGAYLFAMGIGSWV, LELLVGLFGGVSAAALFLLFA, LVLYALVTVIGVLVGMEIPLV, VLTFDYLGALAVSLLFPLVLA, and LVRTGFLFGLCNTAIAVWTLW. Positions 220-464 constitute a PABS domain; that stretch reads AGMVGAALLA…GEWGFILAAP (245 aa). A spermidine synthase region spans residues 222-471; sequence MVGAALLAGF…AAPGRADFRP (250 aa). Residue glutamine 259 participates in S-methyl-5'-thioadenosine binding. Histidine 289 and aspartate 313 together coordinate spermidine. Residues aspartate 333 and 367–368 each bind S-methyl-5'-thioadenosine; that span reads DA. Aspartate 385 serves as the catalytic Proton acceptor.

Belongs to the spermidine/spermine synthase family. Homodimer or homotetramer.

The protein localises to the cell membrane. The enzyme catalyses S-adenosyl 3-(methylsulfanyl)propylamine + putrescine = S-methyl-5'-thioadenosine + spermidine + H(+). It participates in amine and polyamine biosynthesis; spermidine biosynthesis; spermidine from putrescine: step 1/1. Catalyzes the irreversible transfer of a propylamine group from the amino donor S-adenosylmethioninamine (decarboxy-AdoMet) to putrescine (1,4-diaminobutane) to yield spermidine. The chain is Polyamine aminopropyltransferase 1 from Ralstonia nicotianae (strain ATCC BAA-1114 / GMI1000) (Ralstonia solanacearum).